Reading from the N-terminus, the 494-residue chain is UPF0371 protein M28_Spy1076 (494 aa).

The protein belongs to the UPF0371 family.

This chain is UPF0371 protein M28_Spy1076, found in Streptococcus pyogenes serotype M28 (strain MGAS6180).